The sequence spans 314 residues: Acetyl-coenzyme A carboxylase carboxyl transferase subunit alpha (314 aa).

Residues Glu32–Ser289 enclose the CoA carboxyltransferase C-terminal domain.

Belongs to the AccA family. As to quaternary structure, acetyl-CoA carboxylase is a heterohexamer composed of biotin carboxyl carrier protein (AccB), biotin carboxylase (AccC) and two subunits each of ACCase subunit alpha (AccA) and ACCase subunit beta (AccD).

The protein resides in the cytoplasm. The catalysed reaction is N(6)-carboxybiotinyl-L-lysyl-[protein] + acetyl-CoA = N(6)-biotinyl-L-lysyl-[protein] + malonyl-CoA. The protein operates within lipid metabolism; malonyl-CoA biosynthesis; malonyl-CoA from acetyl-CoA: step 1/1. Functionally, component of the acetyl coenzyme A carboxylase (ACC) complex. First, biotin carboxylase catalyzes the carboxylation of biotin on its carrier protein (BCCP) and then the CO(2) group is transferred by the carboxyltransferase to acetyl-CoA to form malonyl-CoA. This Staphylococcus aureus (strain NCTC 8325 / PS 47) protein is Acetyl-coenzyme A carboxylase carboxyl transferase subunit alpha.